The sequence spans 553 residues: COP9 signalosome complex subunit 10 (553 aa).

Over residues 21–46 (AEMEEDSDEMGVYEEETSQGAEEEVP) the composition is skewed to acidic residues. The tract at residues 21 to 47 (AEMEEDSDEMGVYEEETSQGAEEEVPL) is disordered. One can recognise a PCI domain in the interval 298–474 (LRTHFSACLQ…DYVYFGDEPR (177 aa)).

Component of a COP9 signalosome-like (CSN) complex.

It is found in the cytoplasm. The protein localises to the nucleus. Its function is as follows. Component of the COP9 signalosome (CSN) complex that acts as an regulator of the ubiquitin (Ubl) conjugation pathway by mediating the deneddylation of the cullin subunit of SCF-type E3 ubiquitin-protein ligase complexes. The CSN complex is involved in the regulation of the mating pheromone response. This Eremothecium gossypii (strain ATCC 10895 / CBS 109.51 / FGSC 9923 / NRRL Y-1056) (Yeast) protein is COP9 signalosome complex subunit 10 (RRI2).